Consider the following 220-residue polypeptide: Uracil-DNA glycosylase (220 aa).

Residue aspartate 60 is the Proton acceptor of the active site.

Belongs to the uracil-DNA glycosylase (UDG) superfamily. UNG family.

The protein resides in the cytoplasm. It catalyses the reaction Hydrolyzes single-stranded DNA or mismatched double-stranded DNA and polynucleotides, releasing free uracil.. Excises uracil residues from the DNA which can arise as a result of misincorporation of dUMP residues by DNA polymerase or due to deamination of cytosine. This chain is Uracil-DNA glycosylase, found in Francisella tularensis subsp. novicida (strain U112).